The primary structure comprises 30 residues: V-type proton ATPase catalytic subunit A isoform 2 (30 aa).

The protein belongs to the ATPase alpha/beta chains family. V-ATPase is a heteromultimeric enzyme composed of a peripheral catalytic V1 complex (main components: subunits A, B, C, D, E, and F) attached to an integral membrane V0 proton pore complex (main component: the proteolipid protein).

It catalyses the reaction ATP + H2O + 4 H(+)(in) = ADP + phosphate + 5 H(+)(out). Its function is as follows. Catalytic subunit of the peripheral V1 complex of vacuolar ATPase. V-ATPase vacuolar ATPase is responsible for acidifying a variety of intracellular compartments in eukaryotic cells. This is V-type proton ATPase catalytic subunit A isoform 2 from Equisetum arvense (Field horsetail).